The following is a 784-amino-acid chain: ATP-dependent zinc metalloprotease FTSH 9, chloroplastic/mitochondrial (784 aa).

Composition is skewed to low complexity over residues 1–12 (MSALQASLLLRP), 24–34 (PLPSSSASFPR), and 42–53 (PLPLRALASEGP). A chloroplast and mitochondrion-targeting transit peptide spans 1-47 (MSALQASLLLRPLPSPLPPRRRLPLPSSSASFPRAGHHRRLPLPLRA). Positions 1-71 (MSALQASLLL…DPPPPELPAA (71 aa)) are disordered. Residues 54-69 (QPAPSPAPDPPPPELP) show a composition bias toward pro residues. The next 2 membrane-spanning stretches (helical) occupy residues 104-124 (WVLALAAAVVAAARRFFDWVV) and 267-287 (IFSTVLFTIAVGLMWVMGAAA). ATP is bound at residue 368 to 375 (GSPGTGKT). His-601 serves as a coordination point for Zn(2+). Glu-602 is an active-site residue. 2 residues coordinate Zn(2+): His-605 and Asp-679.

In the N-terminal section; belongs to the AAA ATPase family. This sequence in the C-terminal section; belongs to the peptidase M41 family. Zn(2+) is required as a cofactor.

It localises to the mitochondrion membrane. The protein localises to the plastid. The protein resides in the chloroplast thylakoid membrane. In terms of biological role, probable ATP-dependent zinc metallopeptidase. This is ATP-dependent zinc metalloprotease FTSH 9, chloroplastic/mitochondrial (FTSH9) from Oryza sativa subsp. japonica (Rice).